We begin with the raw amino-acid sequence, 1410 residues long: ABC transporter C family member 13 (1410 aa).

The next 8 helical transmembrane spans lie at 23-43, 60-80, 88-108, 122-142, 148-168, 391-411, 474-494, and 505-525; these read IVLGFGANVVTLLLILILTIT, LLYVTPALGACLSCVDLVLLV, VILCFVPLSGFVMWIAVILSL, ILCFWWIFRFLTDALHLNMIF, QEICLIMLDIAFGISINVLRI, LSGLAITILLIPVNKWISVLI, VFFWATTPTLFSLCTFGLFAL, and FTCLALFNSLISPLNSFPWVI. The ABC transmembrane type-1 1 domain occupies 255–530; it reads CNNYSTPSLI…FPWVINGLID (276 aa). Residues 564 to 791 form the ABC transporter 1 domain; that stretch reads VCVEDASCTW…ISPTFSLTNE (228 aa). 602 to 609 is a binding site for ATP; it reads GEVGSGKT. 6 helical membrane passes run 844–864, 889–909, 963–985, 990–1009, 1087–1107, and 1111–1131; these read AVFSGWFITIVILVSAVLMQG, TSFYLMVLCIFCIINSILTLV, SLPFILNILLANFVGLLGIIVVL, VLFLLLLLPFWYIYSKLQVF, IVLFVAVMAVLGSGGNFPISF, and GLVGLALSYAAPLVSLLGSLL. The ABC transmembrane type-1 2 domain maps to 852–1139; sequence TIVILVSAVL…LLTSFTETEK (288 aa). Positions 1174–1407 constitute an ABC transporter 2 domain; the sequence is VEFHNVTMRY…DSSTFSSFVR (234 aa). 1208–1215 serves as a coordination point for ATP; that stretch reads GRTGAGKS.

The protein belongs to the ABC transporter superfamily. ABCC family. Conjugate transporter (TC 3.A.1.208) subfamily. In terms of tissue distribution, ubiquitous.

It localises to the membrane. It carries out the reaction ATP + H2O + xenobioticSide 1 = ADP + phosphate + xenobioticSide 2.. In terms of biological role, pump for glutathione S-conjugates. This Arabidopsis thaliana (Mouse-ear cress) protein is ABC transporter C family member 13 (ABCC13).